Consider the following 338-residue polypeptide: Probable protein S-acyltransferase 1 (338 aa).

2 helical membrane passes run 32 to 52 (DASS…AFSI) and 68 to 88 (LTLI…FLTS). The region spanning 142 to 192 (KFCDTCQLYRPPRAFHCSICNNCVQRFDHHCPWVGQCIALRNYPFFVCFLS) is the DHHC domain. Cys-172 functions as the S-palmitoyl cysteine intermediate in the catalytic mechanism. 2 consecutive transmembrane segments (helical) span residues 186-206 (FFVC…VFSW) and 225-245 (ILGV…GLTV). The tract at residues 319-338 (FGPKDTKMSSGKSDSEARER) is disordered. The span at 320-338 (GPKDTKMSSGKSDSEARER) shows a compositional bias: basic and acidic residues.

It belongs to the DHHC palmitoyltransferase family.

The protein localises to the endosome membrane. The catalysed reaction is L-cysteinyl-[protein] + hexadecanoyl-CoA = S-hexadecanoyl-L-cysteinyl-[protein] + CoA. Functionally, palmitoyl acyltransferase. In Arabidopsis thaliana (Mouse-ear cress), this protein is Probable protein S-acyltransferase 1 (PAT01).